The primary structure comprises 355 residues: Phenylalanine--tRNA ligase alpha subunit (355 aa).

Glutamate 273 provides a ligand contact to Mg(2+).

Belongs to the class-II aminoacyl-tRNA synthetase family. Phe-tRNA synthetase alpha subunit type 1 subfamily. Tetramer of two alpha and two beta subunits. Requires Mg(2+) as cofactor.

Its subcellular location is the cytoplasm. It catalyses the reaction tRNA(Phe) + L-phenylalanine + ATP = L-phenylalanyl-tRNA(Phe) + AMP + diphosphate + H(+). This Bifidobacterium adolescentis (strain ATCC 15703 / DSM 20083 / NCTC 11814 / E194a) protein is Phenylalanine--tRNA ligase alpha subunit.